The following is a 693-amino-acid chain: Polyribonucleotide nucleotidyltransferase (693 aa).

Residues D489 and D495 each contribute to the Mg(2+) site. Positions P556 to I615 constitute a KH domain. Residues G625–R693 enclose the S1 motif domain.

The protein belongs to the polyribonucleotide nucleotidyltransferase family. As to quaternary structure, component of the RNA degradosome, which is a multiprotein complex involved in RNA processing and mRNA degradation. It depends on Mg(2+) as a cofactor.

The protein resides in the cytoplasm. The catalysed reaction is RNA(n+1) + phosphate = RNA(n) + a ribonucleoside 5'-diphosphate. Involved in mRNA degradation. Catalyzes the phosphorolysis of single-stranded polyribonucleotides processively in the 3'- to 5'-direction. This chain is Polyribonucleotide nucleotidyltransferase, found in Francisella tularensis subsp. holarctica (strain OSU18).